The primary structure comprises 389 residues: Pyruvate dehydrogenase E1 component subunit alpha-1, mitochondrial (389 aa).

The N-terminal 32 residues, 1-32 (MALSRLSSRSNIITRPFSAAFSRLISTDTTPI), are a transit peptide targeting the mitochondrion. Residues His-90, Tyr-116, Arg-117, Gly-165, Val-167, Asp-196, Gly-197, Ala-198, Asn-225, and Tyr-227 each coordinate pyruvate. Thiamine diphosphate-binding residues include Tyr-116, Arg-117, Gly-165, Val-167, Asp-196, Gly-197, Ala-198, and Asn-225. Asp-196 serves as a coordination point for Mg(2+). Mg(2+)-binding residues include Asn-225 and Tyr-227. Residue His-291 participates in thiamine diphosphate binding.

Tetramer of 2 alpha and 2 beta subunits. Requires thiamine diphosphate as cofactor. Mg(2+) serves as cofactor. Expressed in roots, rosettes and flowers.

It is found in the mitochondrion matrix. The enzyme catalyses N(6)-[(R)-lipoyl]-L-lysyl-[protein] + pyruvate + H(+) = N(6)-[(R)-S(8)-acetyldihydrolipoyl]-L-lysyl-[protein] + CO2. With respect to regulation, E1 activity is regulated by phosphorylation (inactivation) and dephosphorylation (activation) of the alpha subunit. Functionally, the pyruvate dehydrogenase complex catalyzes the overall conversion of pyruvate to acetyl-CoA and CO(2). It contains multiple copies of three enzymatic components: pyruvate dehydrogenase (E1), dihydrolipoamide acetyltransferase (E2) and lipoamide dehydrogenase (E3). The polypeptide is Pyruvate dehydrogenase E1 component subunit alpha-1, mitochondrial (E1 ALPHA) (Arabidopsis thaliana (Mouse-ear cress)).